Reading from the N-terminus, the 690-residue chain is Elongation factor G (690 aa).

In terms of domain architecture, tr-type G spans Glu8–Leu282. Residues Ala17–Thr24, Asp81–His85, and Asn135–Asp138 each bind GTP.

This sequence belongs to the TRAFAC class translation factor GTPase superfamily. Classic translation factor GTPase family. EF-G/EF-2 subfamily.

The protein resides in the cytoplasm. In terms of biological role, catalyzes the GTP-dependent ribosomal translocation step during translation elongation. During this step, the ribosome changes from the pre-translocational (PRE) to the post-translocational (POST) state as the newly formed A-site-bound peptidyl-tRNA and P-site-bound deacylated tRNA move to the P and E sites, respectively. Catalyzes the coordinated movement of the two tRNA molecules, the mRNA and conformational changes in the ribosome. This is Elongation factor G from Alkaliphilus oremlandii (strain OhILAs) (Clostridium oremlandii (strain OhILAs)).